A 192-amino-acid polypeptide reads, in one-letter code: Glycerol-3-phosphate acyltransferase (192 aa).

5 helical membrane passes run 1–21 (MTSA…GVLL), 51–71 (LGAV…VLAV), 78–98 (PTVH…PVWL), 112–132 (VLLV…VAVF), and 155–175 (LTAR…LMLW).

It belongs to the PlsY family. As to quaternary structure, probably interacts with PlsX.

The protein localises to the cell inner membrane. The enzyme catalyses an acyl phosphate + sn-glycerol 3-phosphate = a 1-acyl-sn-glycero-3-phosphate + phosphate. It participates in lipid metabolism; phospholipid metabolism. Catalyzes the transfer of an acyl group from acyl-phosphate (acyl-PO(4)) to glycerol-3-phosphate (G3P) to form lysophosphatidic acid (LPA). This enzyme utilizes acyl-phosphate as fatty acyl donor, but not acyl-CoA or acyl-ACP. In Myxococcus xanthus (strain DK1622), this protein is Glycerol-3-phosphate acyltransferase.